Consider the following 296-residue polypeptide: Acetylglutamate kinase (296 aa).

Substrate-binding positions include 67 to 68, Arg-89, and Asn-194; that span reads GG.

Belongs to the acetylglutamate kinase family. ArgB subfamily.

Its subcellular location is the cytoplasm. It carries out the reaction N-acetyl-L-glutamate + ATP = N-acetyl-L-glutamyl 5-phosphate + ADP. It participates in amino-acid biosynthesis; L-arginine biosynthesis; N(2)-acetyl-L-ornithine from L-glutamate: step 2/4. Functionally, catalyzes the ATP-dependent phosphorylation of N-acetyl-L-glutamate. The sequence is that of Acetylglutamate kinase from Brucella abortus (strain S19).